A 65-amino-acid polypeptide reads, in one-letter code: Large ribosomal subunit protein bL35 (65 aa).

The tract at residues 1–26 (MPKMKTNKSAQKRFKKTGSGRFKCKQ) is disordered. Residues 10–26 (AQKRFKKTGSGRFKCKQ) show a composition bias toward basic residues.

The protein belongs to the bacterial ribosomal protein bL35 family.

This is Large ribosomal subunit protein bL35 from Hydrogenovibrio crunogenus (strain DSM 25203 / XCL-2) (Thiomicrospira crunogena).